Reading from the N-terminus, the 598-residue chain is Transcription factor COE3 (598 aa).

The disordered stretch occupies residues 1–23; that stretch reads MFGIQENIPRGGTTMKEEPLGGG. Residues 63 to 66 form an interaction with DNA region; the sequence is RKSN. The C5-type zinc finger occupies 151-170; it reads CRVLLTHEIMCSRCCDKKSC. Interaction with DNA regions lie at residues 197–204 and 236–239; these read NCLKNAGN and NNSK. In terms of domain architecture, IPT/TIG spans 264-347; it reads PCIKAISPSE…KGAPGRFVYT (84 aa). Residues 452 to 483 form a disordered region; it reads TSQANDQVGYSRNTSSVSPRGYVPSSTPQQSN.

This sequence belongs to the COE family. In terms of assembly, forms either a homodimer or a heterodimer with a related family member.

It is found in the nucleus. In terms of biological role, acts as a transcriptional activator. This chain is Transcription factor COE3 (coe3), found in Xenopus laevis (African clawed frog).